The sequence spans 573 residues: Sulfite reductase [NADPH] hemoprotein beta-component (573 aa).

Residues C438, C444, C483, and C487 each coordinate [4Fe-4S] cluster. C487 lines the siroheme pocket.

The protein belongs to the nitrite and sulfite reductase 4Fe-4S domain family. Alpha(8)-beta(8). The alpha component is a flavoprotein, the beta component is a hemoprotein. It depends on siroheme as a cofactor. [4Fe-4S] cluster is required as a cofactor.

The catalysed reaction is hydrogen sulfide + 3 NADP(+) + 3 H2O = sulfite + 3 NADPH + 4 H(+). The protein operates within sulfur metabolism; hydrogen sulfide biosynthesis; hydrogen sulfide from sulfite (NADPH route): step 1/1. Its function is as follows. Component of the sulfite reductase complex that catalyzes the 6-electron reduction of sulfite to sulfide. This is one of several activities required for the biosynthesis of L-cysteine from sulfate. In Staphylococcus haemolyticus (strain JCSC1435), this protein is Sulfite reductase [NADPH] hemoprotein beta-component.